A 660-amino-acid polypeptide reads, in one-letter code: Zeaxanthin epoxidase, chloroplastic (660 aa).

The transit peptide at 1–49 directs the protein to the chloroplast; it reads MYASSARDGIPGKWCNARRKQLPLLISKDFPAELYHSLPCKSLENGHIK. Residues 79–107 and 357–370 contribute to the FAD site; these read KVLV…LVFE and TFSW…LLGD. Positions 545–609 constitute an FHA domain; that stretch reads LVLSRDENMP…HGTWFIDNEG (65 aa).

FAD is required as a cofactor.

It localises to the plastid. It is found in the chloroplast membrane. The protein localises to the chloroplast thylakoid membrane. The catalysed reaction is all-trans-zeaxanthin + 4 reduced [2Fe-2S]-[ferredoxin] + 2 O2 + 4 H(+) = all-trans-violaxanthin + 4 oxidized [2Fe-2S]-[ferredoxin] + 2 H2O. The enzyme catalyses all-trans-zeaxanthin + 2 reduced [2Fe-2S]-[ferredoxin] + O2 + 2 H(+) = all-trans-antheraxanthin + 2 oxidized [2Fe-2S]-[ferredoxin] + H2O. It carries out the reaction all-trans-antheraxanthin + 2 reduced [2Fe-2S]-[ferredoxin] + O2 + 2 H(+) = all-trans-violaxanthin + 2 oxidized [2Fe-2S]-[ferredoxin] + H2O. It catalyses the reaction beta-cryptoxanthin + 2 reduced [2Fe-2S]-[ferredoxin] + O2 + 2 H(+) = (5R,6S)-5,6-epoxi-beta-cryptoxanthin + 2 oxidized [2Fe-2S]-[ferredoxin] + H2O. Its pathway is plant hormone biosynthesis; abscisate biosynthesis. Converts zeaxanthin into antheraxanthin and subsequently violaxanthin. Also acts on beta-cryptoxanthin. Involved in the epoxidation of zeaxanthin. The protein is Zeaxanthin epoxidase, chloroplastic of Capsicum annuum (Capsicum pepper).